We begin with the raw amino-acid sequence, 526 residues long: Lycopene epsilon cyclase, chloroplastic (526 aa).

108-136 (LVVIGCGPAGLALAAESAKLGLNVGLVGP) serves as a coordination point for NAD(+). 2 helical membrane-spanning segments follow: residues 443 to 463 (FFLFGLALILQLDIEGIRSFF) and 477 to 497 (FLGSSLSSADLMLFAFYMFII).

This sequence belongs to the lycopene cyclase family.

It localises to the plastid. It is found in the chloroplast membrane. It catalyses the reaction a carotenoid psi-end group = a carotenoid epsilon-end group. It functions in the pathway carotenoid biosynthesis; alpha-zeacarotene biosynthesis. It participates in carotenoid biosynthesis; delta-carotene biosynthesis. Its function is as follows. Catalyzes the single cyclization reaction which converts lycopene to delta-carotene and neurosporene to alpha-zeacarotene. Required for lutein biosynthesis. The sequence is that of Lycopene epsilon cyclase, chloroplastic from Solanum lycopersicum (Tomato).